The following is a 1194-amino-acid chain: Peroxisomal ATPase PEX1 (1194 aa).

Positions 220–255 are disordered; that stretch reads KTRQRRMSHQGKSVKAKSLASTRHGKRRDDGSGPSG. Residues 221-234 are compositionally biased toward basic residues; the sequence is TRQRRMSHQGKSVK. The AAA-cassette D1 stretch occupies residues 538–730; sequence RSASVLLTGA…GPEPTLKIEK (193 aa). ATP contacts are provided by residues 546 to 553 and 849 to 856; these read GARGSGKT and GYPGCGKT. The tract at residues 844–1028 is AAA-cassette D2; sequence GLLLYGYPGC…LYNAHLEAIH (185 aa). 3 disordered regions span residues 1062 to 1084, 1116 to 1139, and 1174 to 1194; these read YISF…LTNG, QVQQ…EPVI, and RSGE…SSLM. A compositionally biased stretch (polar residues) spans 1066–1084; it reads SMGNKDSTGEPSTQPLTNG. A compositionally biased stretch (low complexity) spans 1116-1127; it reads QVQQQQSQTNQA.

This sequence belongs to the AAA ATPase family. Interacts with PEX6; forming the PEX1-PEX6 AAA ATPase complex, which is composed of a heterohexamer formed by a trimer of PEX1-PEX6 dimers.

It is found in the cytoplasm. The protein localises to the cytosol. Its subcellular location is the peroxisome membrane. It carries out the reaction ATP + H2O = ADP + phosphate + H(+). In terms of biological role, component of the PEX1-PEX6 AAA ATPase complex, a protein dislocase complex that mediates the ATP-dependent extraction of the PEX5 receptor from peroxisomal membranes, an essential step for PEX5 recycling. Specifically recognizes PEX5 monoubiquitinated at 'Cys-6', and pulls it out of the peroxisome lumen through the PEX2-PEX10-PEX12 retrotranslocation channel. Extraction by the PEX1-PEX6 AAA ATPase complex is accompanied by unfolding of the TPR repeats and release of bound cargo from PEX5. Regulates autophagy and biogenesis of peroxisomes and Woronin bodies. Plays important roles in mycelial growth and development and stress response. Is also essential for conidiation and fatty acid utilization. Required for nematode predation via trap formation. The polypeptide is Peroxisomal ATPase PEX1 (Arthrobotrys oligospora (strain ATCC 24927 / CBS 115.81 / DSM 1491) (Nematode-trapping fungus)).